The chain runs to 570 residues: MLSDINISRKHVCKPIAEIATNLGIVESELSVHGANKAKISLSVTNRLASKPDAKLVIVTAVTPTPYGEGKTVTTVGLTQAMNAIGVKTCACIRQPSMGPVFGIKGGAAGGGYAQVVPMEELNLHLTGDIHAVSSAHNLAAAAIDARLFHETRLGAIAFTKESGLNAVNIDPENILWRRVVDHNERSLRQIEVGFGAVNGPVHSSGFDITKASELMAILALSRDVKDLRQRVGRLVLALDLVGKPITAEDIGVAGAMTVIMRDAIEPTLMQTLSGDPCFIHAGPFANIAHGNSSIIADSIASKLADVVVTEAGFGSDMGFEKFSNIKVRESGYKPSAAVVVVTLRALKANSGIESEVAIDQPDMARLEAGFANLQWHINNVHQYGAPVVVAINRFPTDTSAELDWLQAKVATTNAFGCAISDAFANGAQGAAELAKVVHAATMVESEFNCLYETTDTLESKLMTLAEVGYGAASVSLSDKAKLQLAWLHKQGYSELPVCIAKTPMSISHDPNVKGVPRNFELPINELRLNAGAGFITALVGKVMTMPGLGIKPGYLNIDIDADDEIIGLA.

Residue 65-72 participates in ATP binding; it reads TPYGEGKT.

It belongs to the formate--tetrahydrofolate ligase family.

It carries out the reaction (6S)-5,6,7,8-tetrahydrofolate + formate + ATP = (6R)-10-formyltetrahydrofolate + ADP + phosphate. The protein operates within one-carbon metabolism; tetrahydrofolate interconversion. The polypeptide is Formate--tetrahydrofolate ligase (Shewanella piezotolerans (strain WP3 / JCM 13877)).